Consider the following 203-residue polypeptide: Protein-L-isoaspartate O-methyltransferase (203 aa).

Ser-50 is a catalytic residue.

It belongs to the methyltransferase superfamily. L-isoaspartyl/D-aspartyl protein methyltransferase family.

It localises to the cytoplasm. The enzyme catalyses [protein]-L-isoaspartate + S-adenosyl-L-methionine = [protein]-L-isoaspartate alpha-methyl ester + S-adenosyl-L-homocysteine. Catalyzes the methyl esterification of L-isoaspartyl residues in peptides and proteins that result from spontaneous decomposition of normal L-aspartyl and L-asparaginyl residues. It plays a role in the repair and/or degradation of damaged proteins. This chain is Protein-L-isoaspartate O-methyltransferase, found in Methanococcoides burtonii (strain DSM 6242 / NBRC 107633 / OCM 468 / ACE-M).